Reading from the N-terminus, the 760-residue chain is Exostosin-1 (760 aa).

Residues 1–6 (MQAKKR) lie on the Cytoplasmic side of the membrane. A helical; Signal-anchor for type II membrane protein membrane pass occupies residues 7–25 (YILVFVSCAFLAYAYFGGY). Over 26 to 760 (RLKVSPLRPR…KYRQIELVGS (735 aa)) the chain is Lumenal. 2 N-linked (GlcNAc...) asparagine glycosylation sites follow: asparagine 71 and asparagine 327. Arginine 437 provides a ligand contact to UDP-N-acetyl-alpha-D-glucosamine. A glycan (N-linked (GlcNAc...) asparagine) is linked at asparagine 476. The tract at residues 540-560 (LGGSTRSQGAGPTSQTTEGRP) is disordered. Polar residues predominate over residues 541–560 (GGSTRSQGAGPTSQTTEGRP). UDP-N-acetyl-alpha-D-glucosamine-binding residues include arginine 565, aspartate 581, glutamate 582, aspartate 583, glutamate 669, aspartate 670, and arginine 713. Mn(2+) is bound at residue aspartate 583. A disulfide bridge links cysteine 668 with cysteine 716. Aspartate 670 is an active-site residue.

It belongs to the glycosyltransferase 47 family. In terms of assembly, interacts with sau. Mn(2+) is required as a cofactor. As to expression, ubiquitously expressed in early embryos. Later (in stage 10 embryos), it is expressed at higher level in the nervous system. Ubiquitously expressed in wing imaginal disk.

The protein localises to the endoplasmic reticulum membrane. The protein resides in the golgi apparatus membrane. It carries out the reaction 3-O-{[(1-&gt;4)-beta-D-GlcA-(1-&gt;4)-alpha-D-GlcNAc](n)-(1-&gt;4)-beta-D-GlcA-(1-&gt;3)-beta-D-Gal-(1-&gt;3)-beta-D-Gal-(1-&gt;4)-beta-D-Xyl}-L-seryl-[protein] + UDP-N-acetyl-alpha-D-glucosamine = 3-O-{alpha-D-GlcNAc-[(1-&gt;4)-beta-D-GlcA-(1-&gt;4)-alpha-D-GlcNAc](n)-(1-&gt;4)-beta-D-GlcA-(1-&gt;3)-beta-D-Gal-(1-&gt;3)-beta-D-Gal-(1-&gt;4)-beta-D-Xyl}-L-seryl-[protein] + UDP + H(+). It catalyses the reaction 3-O-{alpha-D-GlcNAc-[(1-&gt;4)-beta-D-GlcA-(1-&gt;4)-alpha-D-GlcNAc](n)-(1-&gt;4)-beta-D-GlcA-(1-&gt;3)-beta-D-Gal-(1-&gt;3)-beta-D-Gal-(1-&gt;4)-beta-D-Xyl}-L-seryl-[protein] + UDP-alpha-D-glucuronate = 3-O-{[(1-&gt;4)-beta-D-GlcA-(1-&gt;4)-alpha-D-GlcNAc](n+1)-(1-&gt;4)-beta-D-GlcA-(1-&gt;3)-beta-D-Gal-(1-&gt;3)-beta-D-Gal-(1-&gt;4)-beta-D-Xyl}-L-seryl-[protein] + UDP + H(+). The protein operates within protein modification; protein glycosylation. It functions in the pathway glycan metabolism; heparan sulfate biosynthesis. Its pathway is glycan metabolism; heparin biosynthesis. Functionally, glycosyltransferase required for the biosynthesis of heparan-sulfate and responsible for the alternating addition of beta-1-4-linked glucuronic acid (GlcA) and alpha-1-4-linked N-acetylglucosamine (GlcNAc) units to nascent heparan sulfate chains. Botv is the trigger of heparan sulfate chain initiation and polymerization takes place by a complex of ttv and sotv. Plays a central role in the diffusion of morphogens hedgehog (hh), wingless (wg) and decapentaplegic (dpp) via its role in heparan sulfate proteoglycans (HSPGs) biosynthesis which are required for movement of hh, dpp and wg morphogens. This Drosophila melanogaster (Fruit fly) protein is Exostosin-1 (ttv).